We begin with the raw amino-acid sequence, 212 residues long: Adenylate kinase (212 aa).

Gly-10–Thr-15 contacts ATP. The interval Ala-30–Ile-59 is NMP. AMP is bound by residues Arg-36, Glu-57–Ile-59, Gly-85–Arg-88, and Gln-92. The tract at residues Gly-122–Asp-160 is LID. ATP is bound at residue Arg-123. 2 residues coordinate Zn(2+): Cys-126 and Cys-129. Ile-132–Tyr-133 lines the ATP pocket. 2 residues coordinate Zn(2+): Cys-146 and Cys-149. AMP-binding residues include Arg-157 and Arg-168. Lys-196 contacts ATP.

This sequence belongs to the adenylate kinase family. As to quaternary structure, monomer.

The protein resides in the cytoplasm. It carries out the reaction AMP + ATP = 2 ADP. It functions in the pathway purine metabolism; AMP biosynthesis via salvage pathway; AMP from ADP: step 1/1. Functionally, catalyzes the reversible transfer of the terminal phosphate group between ATP and AMP. Plays an important role in cellular energy homeostasis and in adenine nucleotide metabolism. In Rickettsia rickettsii (strain Iowa), this protein is Adenylate kinase.